We begin with the raw amino-acid sequence, 43 residues long: Protein PsbN (43 aa).

The helical transmembrane segment at 7-27 (VAIFISGLLVSFTGYALYTAF) threads the bilayer.

Belongs to the PsbN family.

The protein resides in the plastid. It localises to the chloroplast thylakoid membrane. Its function is as follows. May play a role in photosystem I and II biogenesis. The protein is Protein PsbN of Sagittaria latifolia (Broadleaf arrowhead).